The sequence spans 437 residues: GTPase Obg (437 aa).

The Obg domain occupies 2–160; the sequence is SMFLDTAKIS…RQLELELKIL (159 aa). Residues 161–338 form the OBG-type G domain; that stretch reads ADVGLVGFPS…LLEATAELLA (178 aa). GTP-binding positions include 167-174, 192-196, 214-217, 284-287, and 319-321; these read GFPSVGKS, FTTIV, DLPG, NKMD, and SSL. 2 residues coordinate Mg(2+): Ser-174 and Thr-194. The region spanning 359-437 is the OCT domain; sequence GFAETEKDFE…IGKFEFEFVD (79 aa).

This sequence belongs to the TRAFAC class OBG-HflX-like GTPase superfamily. OBG GTPase family. As to quaternary structure, monomer. Mg(2+) serves as cofactor.

The protein localises to the cytoplasm. In terms of biological role, an essential GTPase which binds GTP, GDP and possibly (p)ppGpp with moderate affinity, with high nucleotide exchange rates and a fairly low GTP hydrolysis rate. Plays a role in control of the cell cycle, stress response, ribosome biogenesis and in those bacteria that undergo differentiation, in morphogenesis control. This Streptococcus pyogenes serotype M4 (strain MGAS10750) protein is GTPase Obg.